The following is an 856-amino-acid chain: Probable alpha,alpha-trehalose-phosphate synthase [UDP-forming] 8 (856 aa).

Ser5 carries the phosphoserine modification. At Thr32 the chain carries Phosphothreonine. A glycosyltransferase region spans residues 57-541 (ERKIIVANML…AKSFMQDLER (485 aa)).

It in the N-terminal section; belongs to the glycosyltransferase 20 family. This sequence in the C-terminal section; belongs to the trehalose phosphatase family. Expressed in leaves, roots, stems and flowers.

It carries out the reaction D-glucose 6-phosphate + UDP-alpha-D-glucose = alpha,alpha-trehalose 6-phosphate + UDP + H(+). The chain is Probable alpha,alpha-trehalose-phosphate synthase [UDP-forming] 8 (TPS8) from Arabidopsis thaliana (Mouse-ear cress).